Consider the following 387-residue polypeptide: Intraflagellar transport protein 57 (387 aa).

Belongs to the IFT57 family.

The protein resides in the cell projection. Its subcellular location is the cilium. The protein localises to the flagellum. It localises to the cytoplasm. It is found in the cytoskeleton. The protein resides in the flagellum axoneme. Its subcellular location is the flagellum basal body. Component of the intraflagellar transport complex B (IFT-B) involved in flagellar assembly. This chain is Intraflagellar transport protein 57, found in Giardia intestinalis (strain ATCC 50803 / WB clone C6) (Giardia lamblia).